A 1400-amino-acid chain; its full sequence is DNA-directed RNA polymerase subunit beta' (1400 aa).

Cysteine 70, cysteine 72, cysteine 85, and cysteine 88 together coordinate Zn(2+). Aspartate 460, aspartate 462, and aspartate 464 together coordinate Mg(2+). Zn(2+) is bound by residues cysteine 814, cysteine 888, cysteine 895, and cysteine 898. The tract at residues 1367–1400 (DRQAKRAEAQEGPSAEQATDNLAALLNAGFSSDE) is disordered.

Belongs to the RNA polymerase beta' chain family. In terms of assembly, the RNAP catalytic core consists of 2 alpha, 1 beta, 1 beta' and 1 omega subunit. When a sigma factor is associated with the core the holoenzyme is formed, which can initiate transcription. Mg(2+) is required as a cofactor. The cofactor is Zn(2+).

It carries out the reaction RNA(n) + a ribonucleoside 5'-triphosphate = RNA(n+1) + diphosphate. Its function is as follows. DNA-dependent RNA polymerase catalyzes the transcription of DNA into RNA using the four ribonucleoside triphosphates as substrates. The chain is DNA-directed RNA polymerase subunit beta' from Vibrio campbellii (strain ATCC BAA-1116).